A 134-amino-acid polypeptide reads, in one-letter code: MKFSRFVSILVLFGLLTKVQGPSLTDFLFPRRCPRFREECEHRERDLCTRDRDCQKREKCCIFSCGKKCLNPQQDICSLPKDSGYCMAYFPRWWYNKKNGTCQLFIYGGCQGNNNNFQSQSICQNACEKKSNST.

An N-terminal signal peptide occupies residues 1 to 21 (MKFSRFVSILVLFGLLTKVQG). The WAP domain occupies 26-73 (DFLFPRRCPRFREECEHRERDLCTRDRDCQKREKCCIFSCGKKCLNPQ). Intrachain disulfides connect Cys-33/Cys-61, Cys-40/Cys-65, Cys-48/Cys-60, Cys-54/Cys-69, Cys-77/Cys-127, Cys-86/Cys-110, and Cys-102/Cys-123. Residues 77 to 127 (CSLPKDSGYCMAYFPRWWYNKKNGTCQLFIYGGCQGNNNNFQSQSICQNAC) enclose the BPTI/Kunitz inhibitor domain. The interval 102-133 (CQLFIYGGCQGNNNNFQSQSICQNACEKKSNS) is interaction with SEMG1. Residues 117-133 (FQSQSICQNACEKKSNS) are interaction with LTF.

As to quaternary structure, monomer. Homodimer. Homomultimers. Interacts with SEMG1 (via 164-283 AA). Interacts with LTF. Found in a complex with LTF, CLU, EPPIN and SEMG1.

The protein resides in the secreted. Functionally, serine protease inhibitor that plays an essential role in male reproduction and fertility. Modulates the hydrolysis of SEMG1 by KLK3/PSA (a serine protease), provides antimicrobial protection for spermatozoa in the ejaculate coagulum, and binds SEMG1 thereby inhibiting sperm motility. In Rattus norvegicus (Rat), this protein is Eppin (Eppin).